We begin with the raw amino-acid sequence, 231 residues long: NKG2-C type II integral membrane protein (231 aa).

Residues M1–S12 show a composition bias toward polar residues. The interval M1–I31 is disordered. At M1 to K70 the chain is on the cytoplasmic side. Basic and acidic residues predominate over residues D16 to K28. Residues L71 to L93 traverse the membrane as a helical; Signal-anchor for type II membrane protein segment. The Extracellular segment spans residues I94 to L231. N-linked (GlcNAc...) asparagine glycosylation occurs at N100. A C-type lectin domain is found at H116–H229. 3 disulfides stabilise this stretch: C117–C128, C145–C227, and C206–C219. N-linked (GlcNAc...) asparagine glycosylation occurs at N149.

In terms of assembly, heterodimer with KLRD1; disulfide-linked. KLRD1-KLRC2 receptor complex interacts with TYROBP/DAP12 homodimer; this interaction is necessary for the expression on the cell surface. As to expression, natural killer cells.

The protein localises to the cell membrane. Immune activating receptor involved in self-nonself discrimination. In complex with KLRD1 on cytotoxic lymphocyte subsets, recognizes non-classical major histocompatibility MHC-E loaded with signal sequence-derived peptides from non-classical MHC-G molecules, likely playing a role in the generation and effector functions of adaptive natural killer (NK) cells and in maternal-fetal tolerance during pregnancy. Regulates the effector functions of terminally differentiated cytotoxic lymphocyte subsets, and in particular may play a role in adaptive NK cell response to viral infection. Upon MHC-E-peptide binding, transmits intracellular signals via the adapter protein TYROBP/DAP12, triggering the phosphorylation of proximal signaling molecules and cell activation. In Macaca mulatta (Rhesus macaque), this protein is NKG2-C type II integral membrane protein (KLRC2).